The primary structure comprises 271 residues: Uridine-cytidine kinase 1-B (271 aa).

24-32 (GGTASGKST) contacts ATP. Residues Asp-81, Tyr-109, His-114, Arg-163, Arg-172, and Gln-180 each coordinate substrate. Asp-209 serves as a coordination point for ATP. A disordered region spans residues 240–271 (RSQKRTLPGQGDSGGLLLQGKRTHLESSSRPH). Residues 246-259 (LPGQGDSGGLLLQG) show a composition bias toward low complexity. Positions 262–271 (THLESSSRPH) are enriched in basic and acidic residues.

This sequence belongs to the uridine kinase family.

It carries out the reaction uridine + ATP = UMP + ADP + H(+). The catalysed reaction is cytidine + ATP = CMP + ADP + H(+). Its pathway is pyrimidine metabolism; CTP biosynthesis via salvage pathway; CTP from cytidine: step 1/3. The protein operates within pyrimidine metabolism; UMP biosynthesis via salvage pathway; UMP from uridine: step 1/1. Its function is as follows. Phosphorylates uridine and cytidine to uridine monophosphate and cytidine monophosphate. Does not phosphorylate deoxyribonucleosides or purine ribonucleosides. Can use ATP or GTP as a phosphate donor. The polypeptide is Uridine-cytidine kinase 1-B (uck1-b) (Xenopus laevis (African clawed frog)).